The following is a 53-amino-acid chain: ComX pheromone (53 aa).

Residues 1 to 46 (MQEMVGYLIKYPNVLREVMEGNACLLGVDKDQSECIINGFKGLEIY) constitute a propeptide that is removed on maturation. Tryptophan 51 carries 3'-geranyl-2',N2-cyclotryptophan lipidation.

In terms of assembly, interacts directly with the sensor histidine kinase ComP and stimulates its activity. Trp-51 is modified by geranylation, which is essential for activity. Modified by the tryptophan prenyltransferase ComQ before export to the extracellular environment. The type of isoprenyl derivative differs among the different pherotypes and depends on ComX primary sequence.

Its subcellular location is the secreted. In terms of biological role, part of a major quorum-sensing system that regulates the development of genetic competence. Acts through the activation of the two-component regulatory system ComP/ComA composed of a sensor histidine kinase, ComP, and a response regulator, ComA. The polypeptide is ComX pheromone (Bacillus mojavensis).